Consider the following 464-residue polypeptide: Cysteine--tRNA ligase (464 aa).

Cys-30 contacts Zn(2+). Residues 32–42 carry the 'HIGH' region motif; it reads MTVYDYCHIGH. Residues Cys-214, His-239, and Glu-243 each coordinate Zn(2+). The 'KMSKS' region signature appears at 271–275; it reads KMSKS. Lys-274 serves as a coordination point for ATP.

Belongs to the class-I aminoacyl-tRNA synthetase family. Monomer. Zn(2+) is required as a cofactor.

It is found in the cytoplasm. The catalysed reaction is tRNA(Cys) + L-cysteine + ATP = L-cysteinyl-tRNA(Cys) + AMP + diphosphate. The sequence is that of Cysteine--tRNA ligase from Janthinobacterium sp. (strain Marseille) (Minibacterium massiliensis).